Reading from the N-terminus, the 89-residue chain is Large ribosomal subunit protein bL28 (89 aa).

Belongs to the bacterial ribosomal protein bL28 family.

This is Large ribosomal subunit protein bL28 from Chlamydia caviae (strain ATCC VR-813 / DSM 19441 / 03DC25 / GPIC) (Chlamydophila caviae).